The sequence spans 266 residues: Protein-ADP-ribose hydrolase (266 aa).

The Macro domain maps to 74–265 (TDLKDLKPIK…LYKEAFNRDA (192 aa)). Positions 93, 94, and 107 each coordinate ADP-D-ribose. Zn(2+) is bound by residues cysteine 113, histidine 118, and cysteine 120. 7 residues coordinate ADP-D-ribose: cysteine 120, isoleucine 121, aspartate 122, serine 212, threonine 213, glycine 214, and phenylalanine 216.

Belongs to the MacroD-type family. Zn-Macro subfamily. The cofactor is Zn(2+).

The catalysed reaction is 4-O-(ADP-D-ribosyl)-L-aspartyl-[protein] + H2O = L-aspartyl-[protein] + ADP-D-ribose + H(+). Its function is as follows. ADP-ribosylhydrolase that specifically reverses the SirTM-mediated mono-ADP-ribosylation at an asparatate residue of GcvH-L, by releasing ADP-ribose from the target protein. May play a role in the regulation of the response to host-induced oxidative stress. This is Protein-ADP-ribose hydrolase from Staphylococcus aureus (strain MRSA252).